The sequence spans 103 residues: Sec-independent protein translocase protein TatA (103 aa).

Residues Met-1–Ala-21 form a helical membrane-spanning segment. The segment at Val-42–Pro-103 is disordered. Positions Pro-52–Pro-90 are enriched in low complexity. The span at Gln-94–Pro-103 shows a compositional bias: basic and acidic residues.

Belongs to the TatA/E family. As to quaternary structure, the Tat system comprises two distinct complexes: a TatABC complex, containing multiple copies of TatA, TatB and TatC subunits, and a separate TatA complex, containing only TatA subunits. Substrates initially bind to the TatABC complex, which probably triggers association of the separate TatA complex to form the active translocon.

The protein localises to the cell membrane. Part of the twin-arginine translocation (Tat) system that transports large folded proteins containing a characteristic twin-arginine motif in their signal peptide across membranes. TatA could form the protein-conducting channel of the Tat system. The chain is Sec-independent protein translocase protein TatA from Corynebacterium efficiens (strain DSM 44549 / YS-314 / AJ 12310 / JCM 11189 / NBRC 100395).